The sequence spans 437 residues: Adenylosuccinate synthetase (437 aa).

GTP-binding positions include 13–19 and 41–43; these read GDEGKGK and GHT. Catalysis depends on aspartate 14, which acts as the Proton acceptor. Aspartate 14 and glycine 41 together coordinate Mg(2+). IMP is bound by residues 14-17, 39-42, threonine 130, arginine 144, glutamine 225, threonine 240, and arginine 310; these read DEGK and NAGH. Histidine 42 (proton donor) is an active-site residue. Residue 306–312 participates in substrate binding; it reads ATTGRLR. Residues arginine 312, 338–340, and 421–423 each bind GTP; these read KLD and STG.

This sequence belongs to the adenylosuccinate synthetase family. In terms of assembly, homodimer. The cofactor is Mg(2+).

The protein localises to the cytoplasm. The enzyme catalyses IMP + L-aspartate + GTP = N(6)-(1,2-dicarboxyethyl)-AMP + GDP + phosphate + 2 H(+). The protein operates within purine metabolism; AMP biosynthesis via de novo pathway; AMP from IMP: step 1/2. Its function is as follows. Plays an important role in the de novo pathway of purine nucleotide biosynthesis. Catalyzes the first committed step in the biosynthesis of AMP from IMP. The protein is Adenylosuccinate synthetase of Psychromonas ingrahamii (strain DSM 17664 / CCUG 51855 / 37).